A 198-amino-acid polypeptide reads, in one-letter code: ATP-dependent Clp protease proteolytic subunit (198 aa).

Ser-103 functions as the Nucleophile in the catalytic mechanism. His-128 is an active-site residue.

This sequence belongs to the peptidase S14 family. In terms of assembly, fourteen ClpP subunits assemble into 2 heptameric rings which stack back to back to give a disk-like structure with a central cavity, resembling the structure of eukaryotic proteasomes.

The protein localises to the cytoplasm. The catalysed reaction is Hydrolysis of proteins to small peptides in the presence of ATP and magnesium. alpha-casein is the usual test substrate. In the absence of ATP, only oligopeptides shorter than five residues are hydrolyzed (such as succinyl-Leu-Tyr-|-NHMec, and Leu-Tyr-Leu-|-Tyr-Trp, in which cleavage of the -Tyr-|-Leu- and -Tyr-|-Trp bonds also occurs).. Its function is as follows. Cleaves peptides in various proteins in a process that requires ATP hydrolysis. Has a chymotrypsin-like activity. Plays a major role in the degradation of misfolded proteins. In Vesicomyosocius okutanii subsp. Calyptogena okutanii (strain HA), this protein is ATP-dependent Clp protease proteolytic subunit.